The primary structure comprises 265 residues: Sulfur carrier protein FdhD (265 aa).

C107 functions as the Cysteine persulfide intermediate in the catalytic mechanism.

This sequence belongs to the FdhD family.

It is found in the cytoplasm. Its function is as follows. Required for formate dehydrogenase (FDH) activity. Acts as a sulfur carrier protein that transfers sulfur from IscS to the molybdenum cofactor prior to its insertion into FDH. The protein is Sulfur carrier protein FdhD of Staphylococcus aureus (strain NCTC 8325 / PS 47).